Reading from the N-terminus, the 243-residue chain is Putative glycerophosphodiester phosphodiesterase YhdW (243 aa).

The GP-PDE domain occupies 1–238 (MYIIAHRGAS…DYPDFIIKDG (238 aa)). His-6 acts as the Proton acceptor in catalysis. Residues Glu-33 and Asp-35 each coordinate Ca(2+). The Proton donor role is filled by His-48. Position 107 (Glu-107) interacts with Ca(2+).

Belongs to the glycerophosphoryl diester phosphodiesterase family. Ca(2+) is required as a cofactor.

It catalyses the reaction a sn-glycero-3-phosphodiester + H2O = an alcohol + sn-glycerol 3-phosphate + H(+). Its function is as follows. Glycerophosphodiester phosphodiesterase hydrolyzes glycerophosphodiesters into glycerol-3-phosphate (G3P) and the corresponding alcohol. The polypeptide is Putative glycerophosphodiester phosphodiesterase YhdW (yhdW) (Bacillus subtilis (strain 168)).